We begin with the raw amino-acid sequence, 218 residues long: Small ribosomal subunit protein uS3c (218 aa).

The KH type-2 domain maps to 47–118; it reads VQKNMRTSSG…KLNIAVTRIA (72 aa).

This sequence belongs to the universal ribosomal protein uS3 family. As to quaternary structure, part of the 30S ribosomal subunit.

The protein localises to the plastid. Its subcellular location is the chloroplast. This Atropa belladonna (Belladonna) protein is Small ribosomal subunit protein uS3c (rps3).